A 168-amino-acid polypeptide reads, in one-letter code: Ribosome maturation factor RimP (168 aa).

It belongs to the RimP family.

It is found in the cytoplasm. Functionally, required for maturation of 30S ribosomal subunits. The protein is Ribosome maturation factor RimP of Mycoplasma mobile (strain ATCC 43663 / 163K / NCTC 11711) (Mesomycoplasma mobile).